We begin with the raw amino-acid sequence, 108 residues long: Placenta-specific protein 9 (108 aa).

A signal peptide spans 1–19 (MQALLCALAGLALLRAGTG). 2 disordered regions span residues 18-49 (TGEW…SPGC) and 89-108 (SNLP…DDGF). Residues 54 to 91 (AVQRRLDIMEETVEKTVEHLEAEVTGLLGLLEELASNL) are a coiled coil.

This sequence belongs to the PLAC9 family. Highly expressed in placenta, and weakly in ovary, testis, and lung.

It localises to the secreted. This Mus musculus (Mouse) protein is Placenta-specific protein 9 (Plac9).